The sequence spans 300 residues: 7-methylguanosine phosphate-specific 5'-nucleotidase (300 aa).

D41 acts as the Nucleophile in catalysis. D41 and D43 together coordinate Mg(2+). The Proton donor role is filled by D43. E88 lines the CMP pocket. E88 serves as a coordination point for N(7)-methyl-GMP. Substrate contacts are provided by residues 156–157 and K205; that span reads SA. D230 serves as a coordination point for Mg(2+). N6-acetyllysine is present on K256.

The protein belongs to the pyrimidine 5'-nucleotidase family. Monomer.

It is found in the cytoplasm. The catalysed reaction is N(7)-methyl-GMP + H2O = N(7)-methylguanosine + phosphate. It carries out the reaction CMP + H2O = cytidine + phosphate. The enzyme catalyses a ribonucleoside 5'-phosphate + H2O = a ribonucleoside + phosphate. Functionally, specifically hydrolyzes 7-methylguanosine monophosphate (m(7)GMP) to 7-methylguanosine and inorganic phosphate. The specific activity for m(7)GMP may protect cells against undesired salvage of m(7)GMP and its incorporation into nucleic acids. Also has weak activity for CMP. UMP and purine nucleotides are poor substrates. This Homo sapiens (Human) protein is 7-methylguanosine phosphate-specific 5'-nucleotidase (NT5C3B).